Reading from the N-terminus, the 203-residue chain is Probable Tat proofreading chaperone DmsD (203 aa).

Belongs to the TorD/DmsD family. DmsD subfamily.

Functionally, required for biogenesis/assembly of DMSO reductase, but not for the interaction of the DmsA signal peptide with the Tat system. May be part of a chaperone cascade complex that facilitates a folding-maturation pathway for the substrate protein. In Haemophilus influenzae (strain ATCC 51907 / DSM 11121 / KW20 / Rd), this protein is Probable Tat proofreading chaperone DmsD.